The primary structure comprises 119 residues: Fluoride-specific ion channel FluC (119 aa).

3 helical membrane passes run 37 to 54, 61 to 83, and 93 to 112; these read LFAN…AETV, LLLI…ETVT, and ALSN…WLGL. Residues G69 and T72 each coordinate Na(+).

It belongs to the fluoride channel Fluc/FEX (TC 1.A.43) family.

The protein resides in the cell inner membrane. The enzyme catalyses fluoride(in) = fluoride(out). Na(+) is not transported, but it plays an essential structural role and its presence is essential for fluoride channel function. Fluoride-specific ion channel. Important for reducing fluoride concentration in the cell, thus reducing its toxicity. This Neisseria meningitidis serogroup C (strain 053442) protein is Fluoride-specific ion channel FluC.